The chain runs to 102 residues: uncharacterized protein (102 aa).

This sequence belongs to the Gram-positive plasmids replication protein type 2 family.

This is an uncharacterized protein from Staphylococcus aureus.